Reading from the N-terminus, the 992-residue chain is Meckelin (992 aa).

The first 35 residues, 1–35 (MVMRTRPLAAMAVRSCFSALTGTVYLLLVLCEVSW), serve as a signal peptide directing secretion. Over 36–516 (AQIFSFPFQR…SVKYEMNQGD (481 aa)) the chain is Extracellular. Residues 37-280 (QIFSFPFQRP…FHYVFEGAAG (244 aa)) are cysteine-rich. 12 disulfides stabilise this stretch: Cys-49–Cys-62, Cys-65–Cys-78, Cys-80–Cys-97, Cys-100–Cys-114, Cys-117–Cys-127, Cys-129–Cys-150, Cys-153–Cys-170, Cys-173–Cys-184, Cys-186–Cys-197, Cys-237–Cys-246, Cys-253–Cys-268, and Cys-354–Cys-375. Asn-242 is a glycosylation site (N-linked (GlcNAc...) asparagine). The chain crosses the membrane as a helical span at residues 517–545 (AFVQTDIALGVLGGLAVLSSLLKTAGWKR). Residues 546–555 (RIGSPMIDLQ) lie on the Cytoplasmic side of the membrane. Residues 556–587 (TVMKFLLYYAGDLANVFFIITVGTGLYWLIFF) form a helical membrane-spanning segment. Topologically, residues 588-600 (KAQKSVSVLLPMP) are extracellular. The chain crosses the membrane as a helical span at residues 601 to 628 (VQEERFVTYVGCAFAMKALQFLHKLISQ). At 629–667 (ITIDIFFIDWERPKGKVLKAVEGEGGVRSATVPVSIWRT) the chain is on the cytoplasmic side. Positions 668–676 (YFVANEWNE) form an intramembrane region, helical. A discontinuously helical membrane pass occupies residues 668 to 698 (YFVANEWNEIQTVRKINPLFQVLTTLFFLEV). An intramembrane segment occupies 677–685 (IQTVRKINP). The segment at residues 686-698 (LFQVLTTLFFLEV) is an intramembrane region (helical). The Extracellular segment spans residues 699-728 (VGFKNLALMDPSSSLSRSLSDYAAPYSRIL). Residues 729–754 (RYAVATTIWLVIGIVQVVFFAAFYER) constitute an intramembrane region (helical). Residues 729–768 (RYAVATTIWLVIGIVQVVFFAAFYERFIEDKIRQFVDLCS) traverse the membrane as a discontinuously helical segment. An intramembrane segment occupies 755–759 (FIEDK). Positions 760 to 768 (IRQFVDLCS) form an intramembrane region, helical. The Cytoplasmic segment spans residues 769-923 (MSNVSVFLLS…SIFYNDESHS (155 aa)). The segment at residues 924-926 (FSS) is an intramembrane region (helical). A discontinuously helical membrane pass occupies residues 924–949 (FSSVLYYGNEATLLIFDLLFFCVVDL). The stretch at 927 to 933 (VLYYGNE) is an intramembrane region. Residues 934–949 (ATLLIFDLLFFCVVDL) constitute an intramembrane region (helical). Over 950–954 (ACQNF) the chain is Extracellular. Residues 955 to 982 (VLASFLTYLQQEIFRFIRNTVGQKNLAT) form a helical membrane-spanning segment. The Cytoplasmic portion of the chain corresponds to 983–992 (KTLVDERFLI).

In terms of assembly, homodimer. Part of the tectonic-like complex (also named B9 complex). Interacts with DNAJB9, DNAJC10 and mutated SFTPC. Interacts with SYNE2 during the early establishment of cell polarity. Interacts (via C-terminus) with FLNA. Interacts with TMEM218. Interacts with WNT5A. Interacts with ROR2.

It is found in the cell membrane. It localises to the endoplasmic reticulum membrane. The protein localises to the cytoplasm. Its subcellular location is the cytoskeleton. The protein resides in the cilium basal body. Functionally, part of the tectonic-like complex which is required for tissue-specific ciliogenesis and may regulate ciliary membrane composition. Involved in centrosome migration to the apical cell surface during early ciliogenesis. Required for ciliary structure and function, including a role in regulating length and appropriate number through modulating centrosome duplication. Is a key regulator of stereociliary bundle orientation. Required for epithelial cell branching morphology. Essential for endoplasmic reticulum-associated degradation (ERAD) of surfactant protein C (sftpc). Involved in the negative regulation of canonical Wnt signaling, and activation of the non-canonical cascade stimulated by WNT5A. In non-canonical Wnt signaling, it may act as ROR2 coreceptor. The sequence is that of Meckelin (Tmem67) from Rattus norvegicus (Rat).